Consider the following 142-residue polypeptide: Large ribosomal subunit protein uL11 (142 aa).

It belongs to the universal ribosomal protein uL11 family. As to quaternary structure, part of the ribosomal stalk of the 50S ribosomal subunit. Interacts with L10 and the large rRNA to form the base of the stalk. L10 forms an elongated spine to which L12 dimers bind in a sequential fashion forming a multimeric L10(L12)X complex. Post-translationally, one or more lysine residues are methylated.

Its function is as follows. Forms part of the ribosomal stalk which helps the ribosome interact with GTP-bound translation factors. In Shewanella sp. (strain ANA-3), this protein is Large ribosomal subunit protein uL11.